Consider the following 321-residue polypeptide: GDP-L-fucose synthase (321 aa).

14 to 20 lines the NADP(+) pocket; that stretch reads GGSGLVG. Tyr143 (proton donor/acceptor) is an active-site residue. NADP(+) contacts are provided by residues Lys147, 170 to 173, and His186; that span reads PTNV. Residues Lys194, Trp208, Arg215, and Asp277 each coordinate substrate.

Belongs to the NAD(P)-dependent epimerase/dehydratase family. Fucose synthase subfamily. As to quaternary structure, homodimer.

It carries out the reaction GDP-beta-L-fucose + NADP(+) = GDP-4-dehydro-alpha-D-rhamnose + NADPH + H(+). Its pathway is nucleotide-sugar biosynthesis; GDP-L-fucose biosynthesis via de novo pathway; GDP-L-fucose from GDP-alpha-D-mannose: step 2/2. Catalyzes the two-step NADP-dependent conversion of GDP-4-dehydro-6-deoxy-D-mannose to GDP-fucose, involving an epimerase and a reductase reaction. The protein is GDP-L-fucose synthase (GFUS) of Cricetulus griseus (Chinese hamster).